The chain runs to 210 residues: Proteasome subunit beta (210 aa).

A propeptide spans 1 to 9 (removed in mature form; by autocatalysis); sequence MDNDKYLKG. The active-site Nucleophile is T10.

Belongs to the peptidase T1B family. As to quaternary structure, the 20S proteasome core is composed of 14 alpha and 14 beta subunits that assemble into four stacked heptameric rings, resulting in a barrel-shaped structure. The two inner rings, each composed of seven catalytic beta subunits, are sandwiched by two outer rings, each composed of seven alpha subunits. The catalytic chamber with the active sites is on the inside of the barrel. Has a gated structure, the ends of the cylinder being occluded by the N-termini of the alpha-subunits. Is capped at one or both ends by the proteasome regulatory ATPase, PAN.

The protein resides in the cytoplasm. It carries out the reaction Cleavage of peptide bonds with very broad specificity.. Its activity is regulated as follows. The formation of the proteasomal ATPase PAN-20S proteasome complex, via the docking of the C-termini of PAN into the intersubunit pockets in the alpha-rings, triggers opening of the gate for substrate entry. Interconversion between the open-gate and close-gate conformations leads to a dynamic regulation of the 20S proteasome proteolysis activity. Component of the proteasome core, a large protease complex with broad specificity involved in protein degradation. The chain is Proteasome subunit beta from Methanosarcina thermophila.